Consider the following 369-residue polypeptide: Large ribosomal subunit protein uL4 (369 aa).

An N-acetylthreonine modification is found at threonine 2.

The protein belongs to the universal ribosomal protein uL4 family.

In Dictyostelium discoideum (Social amoeba), this protein is Large ribosomal subunit protein uL4 (rpl4).